Here is a 199-residue protein sequence, read N- to C-terminus: Chaperone protein TorD (199 aa).

The protein belongs to the TorD/DmsD family. TorD subfamily.

Its subcellular location is the cytoplasm. Its function is as follows. Involved in the biogenesis of TorA. Acts on TorA before the insertion of the molybdenum cofactor and, as a result, probably favors a conformation of the apoenzyme that is competent for acquiring the cofactor. This Shigella dysenteriae serotype 1 (strain Sd197) protein is Chaperone protein TorD.